We begin with the raw amino-acid sequence, 294 residues long: 4-hydroxy-tetrahydrodipicolinate synthase (294 aa).

Threonine 47 lines the pyruvate pocket. The Proton donor/acceptor role is filled by tyrosine 135. The active-site Schiff-base intermediate with substrate is lysine 163. Pyruvate is bound at residue threonine 205.

The protein belongs to the DapA family. In terms of assembly, homotetramer; dimer of dimers.

It localises to the cytoplasm. It catalyses the reaction L-aspartate 4-semialdehyde + pyruvate = (2S,4S)-4-hydroxy-2,3,4,5-tetrahydrodipicolinate + H2O + H(+). It functions in the pathway amino-acid biosynthesis; L-lysine biosynthesis via DAP pathway; (S)-tetrahydrodipicolinate from L-aspartate: step 3/4. In terms of biological role, catalyzes the condensation of (S)-aspartate-beta-semialdehyde [(S)-ASA] and pyruvate to 4-hydroxy-tetrahydrodipicolinate (HTPA). This chain is 4-hydroxy-tetrahydrodipicolinate synthase, found in Rickettsia felis (strain ATCC VR-1525 / URRWXCal2) (Rickettsia azadi).